The sequence spans 233 residues: 2-C-methyl-D-erythritol 4-phosphate cytidylyltransferase (233 aa).

Belongs to the IspD/TarI cytidylyltransferase family. IspD subfamily.

It carries out the reaction 2-C-methyl-D-erythritol 4-phosphate + CTP + H(+) = 4-CDP-2-C-methyl-D-erythritol + diphosphate. The protein operates within isoprenoid biosynthesis; isopentenyl diphosphate biosynthesis via DXP pathway; isopentenyl diphosphate from 1-deoxy-D-xylulose 5-phosphate: step 2/6. In terms of biological role, catalyzes the formation of 4-diphosphocytidyl-2-C-methyl-D-erythritol from CTP and 2-C-methyl-D-erythritol 4-phosphate (MEP). The protein is 2-C-methyl-D-erythritol 4-phosphate cytidylyltransferase of Geotalea uraniireducens (strain Rf4) (Geobacter uraniireducens).